The sequence spans 193 residues: Potassium-transporting ATPase KdpC subunit (193 aa).

A helical membrane pass occupies residues Ala10–Ile30.

The protein belongs to the KdpC family. The system is composed of three essential subunits: KdpA, KdpB and KdpC.

Its subcellular location is the cell membrane. In terms of biological role, part of the high-affinity ATP-driven potassium transport (or Kdp) system, which catalyzes the hydrolysis of ATP coupled with the electrogenic transport of potassium into the cytoplasm. This subunit acts as a catalytic chaperone that increases the ATP-binding affinity of the ATP-hydrolyzing subunit KdpB by the formation of a transient KdpB/KdpC/ATP ternary complex. The sequence is that of Potassium-transporting ATPase KdpC subunit from Herpetosiphon aurantiacus (strain ATCC 23779 / DSM 785 / 114-95).